Consider the following 157-residue polypeptide: Large ribosomal subunit protein bL20 (157 aa).

The tract at residues 121–157 (TSAPAVSAEAAPKAKAAKKPAAKKAAAKKPVAEEAAK) is disordered. A compositionally biased stretch (low complexity) spans 122–134 (SAPAVSAEAAPKA). The segment covering 135–147 (KAAKKPAAKKAAA) has biased composition (basic residues).

The protein belongs to the bacterial ribosomal protein bL20 family.

Its function is as follows. Binds directly to 23S ribosomal RNA and is necessary for the in vitro assembly process of the 50S ribosomal subunit. It is not involved in the protein synthesizing functions of that subunit. This is Large ribosomal subunit protein bL20 (rplT) from Arthrobacter sp. (strain FB24).